A 412-amino-acid chain; its full sequence is Tyrosine--tRNA ligase (412 aa).

Residue Y41 participates in L-tyrosine binding. The 'HIGH' region motif lies at 46–55 (ATADSLHVGH). 2 residues coordinate L-tyrosine: Y174 and Q178. Positions 234 to 238 (KMGKS) match the 'KMSKS' region motif. K237 serves as a coordination point for ATP. The S4 RNA-binding domain maps to 348–411 (LSLTDLLLEH…KKQHLHLRLE (64 aa)).

It belongs to the class-I aminoacyl-tRNA synthetase family. TyrS type 1 subfamily. In terms of assembly, homodimer.

Its subcellular location is the cytoplasm. It carries out the reaction tRNA(Tyr) + L-tyrosine + ATP = L-tyrosyl-tRNA(Tyr) + AMP + diphosphate + H(+). Catalyzes the attachment of tyrosine to tRNA(Tyr) in a two-step reaction: tyrosine is first activated by ATP to form Tyr-AMP and then transferred to the acceptor end of tRNA(Tyr). The chain is Tyrosine--tRNA ligase from Pseudomonas aeruginosa (strain LESB58).